The primary structure comprises 382 residues: Pentraxin-related protein PTX3 (382 aa).

Residues 1–17 (MHISVILFCALWSAVSA) form the signal peptide. A coiled-coil region spans residues 79 to 137 (VMLRGELQKLQAELGRLEGSLQKLCGPEAPSETRLARALDDLLQASRDAGRRLARLEDA). 2 cysteine pairs are disulfide-bonded: Cys180-Cys358 and Cys211-Cys272. Positions 180–382 (CETAILFPMR…QPHGGAQYVY (203 aa)) constitute a Pentraxin (PTX) domain. Asn221 is a glycosylation site (N-linked (GlcNAc...) asparagine).

As to quaternary structure, homooctamer; disulfide-linked. Binds to C1q.

It is found in the secreted. Plays a role in the regulation of innate resistance to pathogens, inflammatory reactions, possibly clearance of self-components and female fertility. This Bos taurus (Bovine) protein is Pentraxin-related protein PTX3 (PTX3).